The primary structure comprises 180 residues: Oligoribonuclease (180 aa).

One can recognise an Exonuclease domain in the interval 7-170 (LIWIDLEMTG…DDIRESIAEL (164 aa)). Y128 is a catalytic residue.

The protein belongs to the oligoribonuclease family.

It is found in the cytoplasm. 3'-to-5' exoribonuclease specific for small oligoribonucleotides. This is Oligoribonuclease from Pseudomonas fluorescens (strain Pf0-1).